A 321-amino-acid chain; its full sequence is Fe-S cluster assembly protein DRE2 (321 aa).

The tract at residues 1 to 131 is N-terminal SAM-like domain; it reads MERMLLLSPP…KPDFGPENIV (131 aa). Residues 132-213 are linker; the sequence is PLKLGKRKPV…EETLLDGEDM (82 aa). Positions 223, 234, 237, and 239 each coordinate [2Fe-2S] cluster. The interval 223-239 is fe-S binding site A; sequence CRPKAGKRRRACKDCTC. [4Fe-4S] cluster-binding residues include Cys-284, Cys-287, Cys-295, and Cys-298. 2 short sequence motifs (cx2C motif) span residues 284–287 and 295–298; these read CGNC and CDGC. The fe-S binding site B stretch occupies residues 284–298; sequence CGNCALGDAFRCDGC.

This sequence belongs to the anamorsin family. As to quaternary structure, monomer. Interacts with TAH18. Interacts with MIA40. [2Fe-2S] cluster is required as a cofactor. It depends on [4Fe-4S] cluster as a cofactor.

It is found in the cytoplasm. It localises to the mitochondrion intermembrane space. Functionally, component of the cytosolic iron-sulfur (Fe-S) protein assembly (CIA) machinery required for the maturation of extramitochondrial Fe-S proteins. Part of an electron transfer chain functioning in an early step of cytosolic Fe-S biogenesis, facilitating the de novo assembly of a [4Fe-4S] cluster on the scaffold complex CFD1-NBP35. Electrons are transferred to DRE2 from NADPH via the FAD- and FMN-containing protein TAH18. TAH18-DRE2 are also required for the assembly of the diferric tyrosyl radical cofactor of ribonucleotide reductase (RNR), probably by providing electrons for reduction during radical cofactor maturation in the catalytic small subunit RNR2. The protein is Fe-S cluster assembly protein DRE2 of Coccidioides immitis (strain RS) (Valley fever fungus).